The following is a 1284-amino-acid chain: Neurexin-4 (1284 aa).

The first 35 residues, 1–35, serve as a signal peptide directing secretion; that stretch reads MRPPRSNTKAAFSSLQFGLLCLLLLVNNGIKSVQA. At 36-1217 the chain is on the extracellular side; that stretch reads DAFTDYFSDY…LRKAYNEVDS (1182 aa). Residues 47–185 enclose the F5/8 type C domain; that stretch reads CNQPLMERAV…ISMRVELYGC (139 aa). C47 and C185 form a disulfide bridge. Residues N195, N329, N340, and N398 are each glycosylated (N-linked (GlcNAc...) asparagine). In terms of domain architecture, Laminin G-like 1 spans 220 to 369; sequence FKTAFANGVM…FTRVNTIYAC (150 aa). The cysteines at positions 333 and 369 are disulfide-linked. A Laminin G-like 2 domain is found at 403-540; it reads FRTYEETGVM…CGDDVVVDAC (138 aa). 4 disulfide bridges follow: C507–C540, C546–C557, C551–C566, and C568–C578. Positions 542-579 constitute an EGF-like 1 domain; sequence MIDRCNPNPCQHKGLCHQNSREFFCDCGHTGYAGAVCH. N-linked (GlcNAc...) asparagine glycosylation occurs at N668. The 139-residue stretch at 824-962 folds into the Laminin G-like 3 domain; that stretch reads FRTTQENSVI…RGLYGISTGC (139 aa). Cystine bridges form between C934-C962, C966-C977, C971-C986, and C988-C998. Residues 962–999 form the EGF-like 2 domain; that stretch reads CVGRCESNPCLNNGTCIERYDGYSCDCRWSAFKGPICA. N-linked (GlcNAc...) asparagine glycosylation occurs at N974. The Laminin G-like 4 domain occupies 1032 to 1183; that stretch reads FTTTIPKGFL…LGTQLTEDFC (152 aa). Residues N1047 and N1137 are each glycosylated (N-linked (GlcNAc...) asparagine). C1147 and C1183 are joined by a disulfide. Residues 1218-1238 form a helical membrane-spanning segment; that stretch reads VLLACLLVILFLLLILMFFLI. The Cytoplasmic portion of the chain corresponds to 1239 to 1284; sequence GRYLHRHKGDYLTHEDQGADGADDPDDAVLHSTTGHQVRKRTEIFI.

It belongs to the neurexin family. As to quaternary structure, forms a complex with Nrg and Cont. Forms a complex composed of septa junction proteins Nrx-IV/Nrx, Tsf2/MTf, Cont and Nrg during late embryogenesis. The C-terminal region interacts with coracle. Interacts with Patj in cis form. As to expression, found in septate junctions of epithelial and glial cells.

Its subcellular location is the cell membrane. The protein localises to the cell junction. The protein resides in the septate junction. Seems to play a role in the formation and function of septate junctions. Septate junctions, which are the equivalent of vertebrates tight junctions, are characterized by regular arrays of transverse structures that span the intermembrane space and form a physical barrier to diffusion. Required for the blood-brain barrier formation. This Drosophila melanogaster (Fruit fly) protein is Neurexin-4 (Nrx-IV).